A 135-amino-acid chain; its full sequence is Large ribosomal subunit protein mL41B (135 aa).

A mitochondrion-targeting transit peptide spans 1-13 (MGLITKIARGLVR).

Belongs to the mitochondrion-specific ribosomal protein mL41 family. In terms of assembly, component of the mitochondrial ribosome large subunit (39S) which comprises a 16S rRNA and about 50 distinct proteins.

It localises to the mitochondrion. Component of the mitochondrial ribosome large subunit. Also involved in apoptosis and cell cycle. The polypeptide is Large ribosomal subunit protein mL41B (mrpl41-b) (Xenopus laevis (African clawed frog)).